We begin with the raw amino-acid sequence, 63 residues long: Large ribosomal subunit protein bL33 (63 aa).

Belongs to the bacterial ribosomal protein bL33 family.

The polypeptide is Large ribosomal subunit protein bL33 (Gloeobacter violaceus (strain ATCC 29082 / PCC 7421)).